Here is a 610-residue protein sequence, read N- to C-terminus: Ecto-NOX disulfide-thiol exchanger 2 (610 aa).

The region spanning 128-207 (KTVFVGGLPE…GRLHVDFAQA (80 aa)) is the RRM domain. 2 coiled-coil regions span residues 293–328 (IQSA…LSGI) and 381–505 (RREE…KESC).

This sequence belongs to the ENOX family. Cu cation serves as cofactor. Glycosylated. As to expression, found in the sera of cancer patients with a wide variety of cancers including breast, prostate, lung and ovarian cancers, leukemias, and lymphomas. Not found in the serum of healthy volunteers or patients with disorders other than cancer. Probably shed into serum by cancer cells. Found on the cell borders of renal, kidney and ovarian carcinomas but not on the borders of surrounding non-cancerous stromal cells.

It localises to the cell membrane. The protein localises to the secreted. It is found in the extracellular space. Inhibited by the antitumor sulfonylurea LY181984, the vabilloid capsaicin, and retinoids. Its function is as follows. May be involved in cell growth. Probably acts as a terminal oxidase of plasma electron transport from cytosolic NAD(P)H via hydroquinones to acceptors at the cell surface. Hydroquinone oxidase activity alternates with a protein disulfide-thiol interchange/oxidoreductase activity which may control physical membrane displacements associated with vesicle budding or cell enlargement. The activities oscillate with a period length of 22 minutes and play a role in control of the ultradian cellular biological clock. The chain is Ecto-NOX disulfide-thiol exchanger 2 (ENOX2) from Homo sapiens (Human).